We begin with the raw amino-acid sequence, 296 residues long: Nucleotide-binding protein SSA_0810 (296 aa).

13–20 is an ATP binding site; that stretch reads GMSGAGKT. 63-66 contributes to the GTP binding site; that stretch reads DMRS. A disordered region spans residues 277-296; sequence WPVNSSHRDKNRRKETVNRS. The segment covering 282-296 has biased composition (basic and acidic residues); the sequence is SHRDKNRRKETVNRS.

Belongs to the RapZ-like family.

Its function is as follows. Displays ATPase and GTPase activities. This Streptococcus sanguinis (strain SK36) protein is Nucleotide-binding protein SSA_0810.